A 319-amino-acid chain; its full sequence is Alpha-hemolysin (319 aa).

The first 26 residues, 1-26 (MKTRIVSSVTTTLLLGSILMNPVAGA), serve as a signal peptide directing secretion.

Belongs to the aerolysin family. As to quaternary structure, self-assembles to first form a non-lytic oligomeric intermediate, and then, a mushroom-shaped homoheptamer structure of 100 Angstroms in length and up to 100 Angstroms in diameter. Interacts with human ADAM10; this interaction is required for toxin pore formation, disruption of focal adhesions, and hly-mediated cytotoxicity.

It localises to the secreted. Its function is as follows. Alpha-toxin binds to the membrane of eukaryotic cells (particularly red blood cells, RBC) forming pores, resulting in hemolysis, with the release of low-molecular weight molecules leading to eventual osmotic RBC lysis. Human RBCs bind much less alpha-toxin than do rabbit RBCs. Heptamer oligomerization and pore formation is required for lytic activity. This chain is Alpha-hemolysin (hly), found in Staphylococcus aureus.